A 248-amino-acid polypeptide reads, in one-letter code: Transmembrane protein 182 (248 aa).

Positions 1–26 (MKIHVAGFFAGLFGALATLFILLSFG) are cleaved as a signal peptide. Residues 27–136 (TDYWLLASET…IIYRGFWSVS (110 aa)) are Extracellular-facing. 2 N-linked (GlcNAc...) asparagine glycosylation sites follow: N66 and N119. Residues 137 to 157 (MLVGVAAVVAGGFIIICAAPF) form a helical membrane-spanning segment. At 158-167 (ASHRLYKAGG) the chain is on the cytoplasmic side. Residues 168-188 (GLYLISGFFVLVVTAMYVIWI) traverse the membrane as a helical segment. Residues 189-218 (DVLDVISLYTEYQKLNKCADFELNKTYGLS) are Extracellular-facing. The N-linked (GlcNAc...) asparagine glycan is linked to N212. The helical transmembrane segment at 219–239 (FMFAPVGVFFCFLSGLLFLVI) threads the bilayer. The Cytoplasmic segment spans residues 240–248 (GRTVHHQYN).

The protein belongs to the TMEM182 family.

The protein resides in the cell membrane. In terms of biological role, may negatively regulate myogenesis and skeletal muscle regeneration. The polypeptide is Transmembrane protein 182 (tmem182a) (Danio rerio (Zebrafish)).